A 459-amino-acid chain; its full sequence is Chromosomal replication initiator protein DnaA (459 aa).

Residues 1–74 (MMEMPIDNLW…ANVVQSILGH (74 aa)) are domain I, interacts with DnaA modulators. The segment at 74 to 117 (HPVEIYITVAKGEEFEEIGGGGEWELPTTNIINETPNQNRQPNT) is domain II. Positions 118 to 334 (ELNAKYVFSR…GALTRALAYI (217 aa)) are domain III, AAA+ region. 4 residues coordinate ATP: Gly162, Gly164, Lys165, and Thr166. The domain IV, binds dsDNA stretch occupies residues 335–459 (SIWGLPMTVA…IKMNSRSRKP (125 aa)).

Belongs to the DnaA family. In terms of assembly, oligomerizes as a right-handed, spiral filament on DNA at oriC.

The protein localises to the cytoplasm. In terms of biological role, plays an essential role in the initiation and regulation of chromosomal replication. ATP-DnaA binds to the origin of replication (oriC) to initiate formation of the DNA replication initiation complex once per cell cycle. Binds the DnaA box (a 9 base pair repeat at the origin) and separates the double-stranded (ds)DNA. Forms a right-handed helical filament on oriC DNA; dsDNA binds to the exterior of the filament while single-stranded (ss)DNA is stabiized in the filament's interior. The ATP-DnaA-oriC complex binds and stabilizes one strand of the AT-rich DNA unwinding element (DUE), permitting loading of DNA polymerase. After initiation quickly degrades to an ADP-DnaA complex that is not apt for DNA replication. Binds acidic phospholipids. This Nostoc sp. (strain PCC 7120 / SAG 25.82 / UTEX 2576) protein is Chromosomal replication initiator protein DnaA.